We begin with the raw amino-acid sequence, 309 residues long: Assembly-complementing factor 4 (309 aa).

Disordered regions lie at residues 1–80 (MSED…ASPI), 164–240 (KSIN…ENTP), and 286–309 (VRSE…LFKR). Basic and acidic residues-rich tracts occupy residues 13-24 (ELHKLSIVDKHS) and 34-44 (KQHEVQPESKS). A phosphoserine mark is found at S44, S71, S74, S78, and S165. A compositionally biased stretch (polar residues) spans 61-80 (SSPQRSTTNQSPVSDHASPI). Composition is skewed to low complexity over residues 174–188 (NNNV…LPNR), 205–214 (PSRSSESTPT), and 222–239 (PRNT…GENT). Acidic residues predominate over residues 287–298 (RSEDEDDEEFEP). S288 is subject to Phosphoserine.

Its function is as follows. May be involved in actin cytoskeleton organization and biogenesis. The protein is Assembly-complementing factor 4 (ACF4) of Saccharomyces cerevisiae (strain ATCC 204508 / S288c) (Baker's yeast).